The following is a 383-amino-acid chain: Succinyl-diaminopimelate desuccinylase (383 aa).

His73 provides a ligand contact to Zn(2+). Asp75 is a catalytic residue. Position 107 (Asp107) interacts with Zn(2+). The active-site Proton acceptor is the Glu141. Zn(2+)-binding residues include Glu142, Glu170, and His356.

Belongs to the peptidase M20A family. DapE subfamily. Homodimer. Requires Zn(2+) as cofactor. Co(2+) serves as cofactor.

It catalyses the reaction N-succinyl-(2S,6S)-2,6-diaminopimelate + H2O = (2S,6S)-2,6-diaminopimelate + succinate. Its pathway is amino-acid biosynthesis; L-lysine biosynthesis via DAP pathway; LL-2,6-diaminopimelate from (S)-tetrahydrodipicolinate (succinylase route): step 3/3. Catalyzes the hydrolysis of N-succinyl-L,L-diaminopimelic acid (SDAP), forming succinate and LL-2,6-diaminopimelate (DAP), an intermediate involved in the bacterial biosynthesis of lysine and meso-diaminopimelic acid, an essential component of bacterial cell walls. This chain is Succinyl-diaminopimelate desuccinylase, found in Pseudomonas entomophila (strain L48).